Consider the following 484-residue polypeptide: MDVRQQDVERIVVEVLKKMMSDQPTAAATTVVAASGCDCGDFGLFDRLEDAVQAAEAAQKKISTVAMRDKIIAAIRKAGLENAKAFAEIAHNETGMGRVSDKIAKNILVCERTPGTECLSPMAISGDMGLTLIENAPWGVIASVTPSTNPTATVINNAISMIAGGNSVIFAPHPNAKRASQTAIQVLNKAIIEATGVANLLVAVKEPTIEVAQELFSHPRIKLLVVTGGEAVVAQARKVATMRLIAAGAGNPPVVVDETANIARAARSIYDGASFDNNIICADEKEIIAVDSIADQLKAEMKAIGAVEISLEQADAVARVVLRNYPQVEGGKAPNPNPKWVGRDAALIAKAAGIDVPDSCRLLIVDVKRDINHVFARVEQLMPVIPLLRAANVDEAIEWALILERGLSHTAGMHSRNIDNMDKMARAMNTSLFVKNGPHLAALGAGGEGWTTMTISTPTGEGVTCARSFVRLRRCCVVDNFRIV.

The protein belongs to the aldehyde dehydrogenase family.

The catalysed reaction is acetaldehyde + NAD(+) + CoA = acetyl-CoA + NADH + H(+). It participates in organosulfur degradation; alkanesulfonate degradation. Functionally, involved in an anaerobic respiration pathway that converts the sulfonate taurine (2-aminoethanesulfonate) to ammonia, acetate and sulfide. Catalyzes the oxidation of acetaldehyde to acetyl-CoA in the presence of CoASH and NAD(+). Highly prefers NAD(+) over NADP(+). The protein is Acetaldehyde dehydrogenase (acetylating) of Bilophila wadsworthia (strain 3_1_6).